The sequence spans 304 residues: DCN1-like protein 3 (304 aa).

Disordered regions lie at residues 1–86 (MGQC…AEES) and 284–304 (EGEG…EEQT). Gly2 carries the N-myristoyl glycine lipid modification. The DCUN1 domain occupies 86-278 (SSLQRLEELF…LFDTFVEWEM (193 aa)).

As to quaternary structure, part of a complex containing DCUN1D3, CUL3 and RBX1. Interacts (via the DCUN1 domain) with the unneddylated cullins: interacts with CUL1, CUL2, CUL3, CUL4A, CUL4B and CUL5; these interactions promote the cullin neddylation and the identity of the cullin dictates the affinity of the interaction. Interacts preferentially with CUL3; this interaction triggers the relocalization of CUL3 to the cell membrane where CUL3 is neddylated. Interacts (via DCUN1 domain) with RBX1. May also interact with regulators or subunits of cullin-RING ligases such as RNF7, ELOB and DDB1; these interactions are bridged by cullins. Interacts (via DCUN1 domain) with CAND1; this interaction is bridged by cullins and strongly inhibits cullin neddylation. These CAND-cullin-DCNL complexes can only be neddylated in the presence of a substrate adapter. Interacts (via DCUN1 domain) with the N-terminally acetylated form of UBE2M and UBE2F. In terms of tissue distribution, tends to be down-regulated in different type of cancers, including lung neuroendocrine carcinoma, thyroid Huerthle cell carcinoma and lung squamous cell carcinoma. Mostly expressed in testis and brain. Highly expressed in liver, bladder and renal normal tissue than their tumor tissue counterparts. Palmitoylation stabilizes DCUN1D3 at the cell membrane.

Its subcellular location is the cell membrane. It is found in the cytoplasm. It localises to the nucleus. The protein localises to the perinuclear region. Contributes to the neddylation of all cullins by transferring NEDD8 from N-terminally acetylated NEDD8-conjugating E2s enzyme to different cullin C-terminal domain-RBX complexes and may play a role in the cell cycle progression by regulating the SCF ubiquitin E3 ligase complex, after UV damage. At the cell membrane, can promote and as well inhibit cullins neddylation. The polypeptide is DCN1-like protein 3 (Homo sapiens (Human)).